The following is a 177-amino-acid chain: Peptide methionine sulfoxide reductase MsrA (177 aa).

Cys15 is a catalytic residue.

This sequence belongs to the MsrA Met sulfoxide reductase family.

It carries out the reaction L-methionyl-[protein] + [thioredoxin]-disulfide + H2O = L-methionyl-(S)-S-oxide-[protein] + [thioredoxin]-dithiol. The enzyme catalyses [thioredoxin]-disulfide + L-methionine + H2O = L-methionine (S)-S-oxide + [thioredoxin]-dithiol. Its function is as follows. Has an important function as a repair enzyme for proteins that have been inactivated by oxidation. Catalyzes the reversible oxidation-reduction of methionine sulfoxide in proteins to methionine. This chain is Peptide methionine sulfoxide reductase MsrA, found in Listeria welshimeri serovar 6b (strain ATCC 35897 / DSM 20650 / CCUG 15529 / CIP 8149 / NCTC 11857 / SLCC 5334 / V8).